Consider the following 269-residue polypeptide: uncharacterized protein (269 aa).

Residues 3-105 constitute a DNA-binding region (ompR/PhoB-type); it reads WIINDNIEFW…VPRRGFKIHN (103 aa).

To V.cholerae cholera toxin transcriptional activator (ToxR).

This is an uncharacterized protein from Escherichia coli (strain K12).